Here is a 262-residue protein sequence, read N- to C-terminus: Glutamate racemase (262 aa).

Substrate is bound by residues 9-10 (DS) and 41-42 (YG). Cys-73 (proton donor/acceptor) is an active-site residue. 74 to 75 (NT) lines the substrate pocket. The active-site Proton donor/acceptor is Cys-180. 181 to 182 (TH) is a binding site for substrate.

The protein belongs to the aspartate/glutamate racemases family.

The catalysed reaction is L-glutamate = D-glutamate. It participates in cell wall biogenesis; peptidoglycan biosynthesis. Its function is as follows. Provides the (R)-glutamate required for cell wall biosynthesis. This chain is Glutamate racemase, found in Aliivibrio fischeri (strain ATCC 700601 / ES114) (Vibrio fischeri).